We begin with the raw amino-acid sequence, 429 residues long: MRVLILGSGVIGTTTAWYLAQSGCEVTVVDRQPASGLETSYANAGQLSFGYTSPWAAPGVPGKAVKWLFEQHAPLSIRPTRDLRQLAWLSQMLRNCTAERYAVNKARMVRLSDYSRDCLNALRASTGLEFEGRQLGTTQLFRTQQQLDAAAQDIEVLAQYGVPYELLSPAQIAQYEPGLAGGGAQMAGALHLPEDQTGDCRLFTQRLADLATQAGVQFRYGQQIERLEHAGGEITGVQIDGRLVTADRYVLALGSYSADLLLSLGLHLPVYPLKGYSLTIPIVDAQRAPTSTVLDESYKIALTRFDERIRVGGMAEVAGFDLSLNPRRRATLEMVVNDLFPGAGDLAQAEFWTGLRPATPDGTPVVGATPYANLFLNTGHGTLGWTMACGSGRYLADLMQGRTPEIDTEGLDVFRYLSTRSTRPHREAA.

3 to 17 lines the FAD pocket; the sequence is VLILGSGVIGTTTAW.

Belongs to the DadA oxidoreductase family. FAD is required as a cofactor.

The enzyme catalyses a D-alpha-amino acid + A + H2O = a 2-oxocarboxylate + AH2 + NH4(+). Its pathway is amino-acid degradation; D-alanine degradation; NH(3) and pyruvate from D-alanine: step 1/1. Functionally, oxidative deamination of D-amino acids. This chain is D-amino acid dehydrogenase, found in Xanthomonas campestris pv. campestris (strain 8004).